Reading from the N-terminus, the 641-residue chain is White-opaque regulator 3 (641 aa).

Over residues 13–27 (ANVNHQQLSQDTNSI) the composition is skewed to polar residues. Disordered stretches follow at residues 13–38 (ANVN…QQQP), 146–245 (QLAS…PMTR), and 258–287 (PIIY…PEPR). 2 stretches are compositionally biased toward low complexity: residues 28-38 (PQQQLQQQQQP) and 151-160 (QNQDQNQSQN). Polar residues predominate over residues 161–172 (RYEQSSMTSIHT). The segment covering 173-184 (NDNSSSVNNSPN) has biased composition (low complexity). The segment covering 193–204 (STFQPQHSNEGS) has biased composition (polar residues). Low complexity-rich tracts occupy residues 216–242 (QQQQ…PQQP) and 264–280 (SSNS…NSSS). The dksA C4-type zinc-finger motif lies at 317–337 (CRRCGSEIPLAERRFVLCPSC). Disordered regions lie at residues 366–409 (LSKE…KVCQ), 480–507 (MSHQ…PQPH), 522–550 (NSGV…HNGS), and 568–641 (LQLQ…YPNN). A compositionally biased stretch (basic and acidic residues) spans 379–400 (QNNKSNEDQNNESRRGSQEKPA). Positions 486–495 (QPPPPPPPPL) are enriched in pro residues. Polar residues predominate over residues 522–533 (NSGVAGIQQPNN). Positions 569–579 (QLQQQQQQQQQ) are enriched in low complexity. A compositionally biased stretch (pro residues) spans 597 to 606 (SFPPPPPPPL). A compositionally biased stretch (low complexity) spans 610-641 (QHQGLQQYSHAQQQQQQQHQQQQPYHQEYPNN).

Its subcellular location is the nucleus. Transcription factor that modulates the white-opaque switch. In Candida albicans (strain SC5314 / ATCC MYA-2876) (Yeast), this protein is White-opaque regulator 3 (WOR3).